The following is a 565-amino-acid chain: NAD-dependent malic enzyme (565 aa).

Tyrosine 104 serves as the catalytic Proton donor. Arginine 157 lines the NAD(+) pocket. Lysine 175 (proton acceptor) is an active-site residue. A divalent metal cation is bound by residues glutamate 246, aspartate 247, and aspartate 270. The NAD(+) site is built by aspartate 270 and asparagine 418.

It belongs to the malic enzymes family. As to quaternary structure, homotetramer. It depends on Mg(2+) as a cofactor. The cofactor is Mn(2+).

The enzyme catalyses (S)-malate + NAD(+) = pyruvate + CO2 + NADH. It carries out the reaction oxaloacetate + H(+) = pyruvate + CO2. The sequence is that of NAD-dependent malic enzyme from Yersinia pseudotuberculosis serotype O:1b (strain IP 31758).